Reading from the N-terminus, the 254-residue chain is Bidirectional sugar transporter SWEET6b (254 aa).

Topologically, residues 1 to 9 (MISPDAARN) are extracellular. Residues 10–30 (VVGIIGNVISFGLFLAPVPTF) traverse the membrane as a helical segment. Positions 10–98 (VVGIIGNVIS…IFFLYSPNKK (89 aa)) constitute a MtN3/slv 1 domain. Topologically, residues 31–45 (WRICKRKDVEEFKAD) are cytoplasmic. Residues 46-66 (PYLATLLNCMLWVFYGIPIVH) form a helical membrane-spanning segment. Topologically, residues 67–69 (PNS) are extracellular. Residues 70-90 (ILVVTINGIGLVVEGTYLFIF) traverse the membrane as a helical segment. The Cytoplasmic segment spans residues 91–101 (FLYSPNKKRLR). A helical transmembrane segment spans residues 102–122 (MLAVLGVELVFMLAVILGVLL). Topologically, residues 123 to 131 (GAHTHKKRS) are extracellular. The chain crosses the membrane as a helical span at residues 132–152 (MIVGILCVFFGSIMYFSPLTI). Residues 133–216 (IVGILCVFFG…LILYACYYRT (84 aa)) enclose the MtN3/slv 2 domain. The Cytoplasmic portion of the chain corresponds to 153-165 (MGKVIKTKSVEYM). The chain crosses the membrane as a helical span at residues 166–186 (PFFLSLVCFLNGVCWTAYALI). Over 187–189 (RFD) the chain is Extracellular. A helical membrane pass occupies residues 190-210 (IYVTIPNSLGAIFGAIQLILY). At 211-254 (ACYYRTTPKKTKAAKDVEMPSVISGPGAAATASGGSVVSVTVER) the chain is on the cytoplasmic side.

Belongs to the SWEET sugar transporter family. In terms of assembly, forms homooligomers and/or heterooligomers.

The protein localises to the cell membrane. Its function is as follows. Mediates both low-affinity uptake and efflux of sugar across the plasma membrane. The protein is Bidirectional sugar transporter SWEET6b (SWEET6B) of Oryza sativa subsp. indica (Rice).